The chain runs to 652 residues: Zinc finger protein 503 (652 aa).

A compositionally biased stretch (polar residues) spans 1 to 11; it reads MSTAPSLSALR. Residues 1–72 form a disordered region; the sequence is MSTAPSLSAL…HAVPPSDPLR (72 aa). The segment covering 16-32 has biased composition (gly residues); the sequence is SGGGGGGGGGGGSGGGS. Phosphoserine is present on Ser-107. 2 disordered regions span residues 126–283 and 296–338; these read SQIG…GVPA and INVD…SSVL. Over residues 135 to 144 the composition is skewed to low complexity; the sequence is PSSKLSSVAS. Gly residues-rich tracts occupy residues 145–157 and 194–209; these read NGGG…NGAG and GGGG…GGGV. Lys-213 bears the N6-acetyllysine mark. Residues 221-230 are compositionally biased toward polar residues; the sequence is ATCQPFTPRT. Low complexity predominate over residues 231 to 244; sequence GSPSSSASACSPGG. Ser-235 and Ser-241 each carry phosphoserine. The span at 254-263 shows a compositional bias: basic and acidic residues; that stretch reads EGKDDKKDPE. Gly residues predominate over residues 264-283; sequence AGGGGSSKGSGGASADGVPA. A compositionally biased stretch (low complexity) spans 314–336; sequence GSDCGGSSSSSSGSGPSAPTSSS. Residues 520–548 form a C2H2-type zinc finger; that stretch reads HICNWVSANGPCDKRFATSEELLSHLRTH. Position 642 is an omega-N-methylarginine (Arg-642).

It belongs to the Elbow/Noc family.

The protein localises to the nucleus. In terms of biological role, may function as a transcriptional repressor. This Mus musculus (Mouse) protein is Zinc finger protein 503 (Znf503).